Consider the following 694-residue polypeptide: Follicle-stimulating hormone receptor (694 aa).

The N-terminal stretch at 1-17 is a signal peptide; that stretch reads MAFLWISFLVFLGSGSG. 2 cysteine pairs are disulfide-bonded: C18–C25 and C23–C32. In terms of domain architecture, LRRNT spans 18–46; that stretch reads CHHRICHCSDRVFICQESKVTEIPSDIPR. Residues 18–367 lie on the Extracellular side of the membrane; sequence CHHRICHCSD…EDIMGYNFLR (350 aa). LRR repeat units lie at residues 49–72, 73–97, 98–118, 119–143, 144–169, 170–192, 193–216, 217–240, and 241–259; these read VEMR…FRDL, EKIE…LPKL, HEIR…AFWN, LPNL…KIQS, HQKV…AGLS, SESE…AFNG, TQLD…IFQG, ANGP…GLKN, and LKKL…PNLD. Residues N191 and N199 are each glycosylated (N-linked (GlcNAc...) asparagine). The N-linked (GlcNAc...) asparagine glycan is linked to N268. Cystine bridges form between C275–C347, C276–C292, C276–C357, and C292–C339. N293 carries N-linked (GlcNAc...) asparagine glycosylation. Residue Y336 is modified to Sulfotyrosine. Residues 368–388 traverse the membrane as a helical segment; the sequence is VLIWFISILSITGNIVVLVIL. Residues 389-399 are Cytoplasmic-facing; that stretch reads ITSQYKLTVPR. A helical membrane pass occupies residues 400–422; it reads FLMCNLAFADLCIGIYLLLIASV. Over 423 to 444 the chain is Extracellular; that stretch reads DIHTKSQYHNYAIDWQTGAGCD. The cysteines at positions 443 and 518 are disulfide-linked. The chain crosses the membrane as a helical span at residues 445 to 466; that stretch reads AAGFFTVFASELSVYTLTAITL. The Cytoplasmic segment spans residues 467–486; that stretch reads ERWHTITYAMQLDRKVRLRH. Residues 487–509 form a helical membrane-spanning segment; it reads AASIMLIGWIFAFSVALLPIFGV. Over 510–529 the chain is Extracellular; it reads SSYMKVSICLPMDIDSPLSQ. The helical transmembrane segment at 530–551 threads the bilayer; sequence FYVISLLVLNVLASVIICTCYT. Residues 552–574 lie on the Cytoplasmic side of the membrane; sequence HIYFTVRNPNIISSTSDAKIAKR. The helical transmembrane segment at 575–598 threads the bilayer; the sequence is MAMLIFTDFLCMAPISFFAISASV. Topologically, residues 599-609 are extracellular; sequence KMPLITVSKSK. A helical membrane pass occupies residues 610–631; it reads ILLVLFYPINSCANPFLYAVFT. Residues 632–694 lie on the Cytoplasmic side of the membrane; the sequence is KTFRRDFFIL…YKLVPLNHLS (63 aa).

It belongs to the G-protein coupled receptor 1 family. FSH/LSH/TSH subfamily. Homotrimer. Functions as a homotrimer binding the FSH hormone heterodimer composed of CGA and FSHB. Interacts with ARRB2. Interacts with APPL2; interaction is independent of follicle stimulating hormone stimulation. N-glycosylated; indirectly required for FSH-binding, possibly via a conformational change that allows high affinity binding of hormone. Post-translationally, sulfated.

It localises to the cell membrane. G protein-coupled receptor for follitropin, the follicle-stimulating hormone. Through cAMP production activates the downstream PI3K-AKT and ERK1/ERK2 signaling pathways. The sequence is that of Follicle-stimulating hormone receptor (FSHR) from Notamacropus eugenii (Tammar wallaby).